We begin with the raw amino-acid sequence, 197 residues long: Tic20 family protein Ycf60 (197 aa).

A run of 5 helical transmembrane segments spans residues I3–V23, F47–L66, L81–F101, V118–L138, and M141–G161.

It belongs to the Tic20 family.

The protein localises to the plastid. It localises to the chloroplast membrane. The chain is Tic20 family protein Ycf60 (ycf60) from Cyanidioschyzon merolae (strain NIES-3377 / 10D) (Unicellular red alga).